A 394-amino-acid chain; its full sequence is Myb-related protein 2 (394 aa).

Residues 42 to 102 form the HTH myb-type domain; that stretch reads TDAKPRLKWT…HLQKYRLSKN (61 aa). Residues 73-98 constitute a DNA-binding region (H-T-H motif); sequence PKTIMKVMGIPGLTLYHLKSHLQKYR. The tract at residues 148 to 168 is coiled coil; the sequence is GEALQMQIEVQRRLHEQLEVQ. The short motif at 161–166 is the LHEQLE element; it reads LHEQLE. The interval 338–363 is disordered; the sequence is LHGHKSQHQQGNNEDHKLETRNRKGM. Residues 350 to 363 show a composition bias toward basic and acidic residues; that stretch reads NEDHKLETRNRKGM.

The protein belongs to the MYB-CC family. Isoform 1: Homodimer. Isoform 3: Does not form homodimer. In terms of tissue distribution, expressed in phloem and/or cambium.

The protein resides in the nucleus. Functionally, transcriptional activator that may activate the transcription of specific genes involved in nitrogen uptake or assimilation. Acts redundantly with MYR1 as a repressor of flowering and organ elongation under decreased light intensity. Represses gibberellic acid (GA)-dependent responses and affects levels of bioactive GA. This Arabidopsis thaliana (Mouse-ear cress) protein is Myb-related protein 2.